We begin with the raw amino-acid sequence, 261 residues long: 4-hydroxy-tetrahydrodipicolinate reductase (261 aa).

NAD(+) is bound by residues 11-16, 96-98, and 122-125; these read GFTGAM, GTT, and APNF. The active-site Proton donor/acceptor is H152. H153 contacts (S)-2,3,4,5-tetrahydrodipicolinate. K156 serves as the catalytic Proton donor. 162–163 contributes to the (S)-2,3,4,5-tetrahydrodipicolinate binding site; that stretch reads GT.

This sequence belongs to the DapB family.

It localises to the cytoplasm. It catalyses the reaction (S)-2,3,4,5-tetrahydrodipicolinate + NAD(+) + H2O = (2S,4S)-4-hydroxy-2,3,4,5-tetrahydrodipicolinate + NADH + H(+). The catalysed reaction is (S)-2,3,4,5-tetrahydrodipicolinate + NADP(+) + H2O = (2S,4S)-4-hydroxy-2,3,4,5-tetrahydrodipicolinate + NADPH + H(+). It participates in amino-acid biosynthesis; L-lysine biosynthesis via DAP pathway; (S)-tetrahydrodipicolinate from L-aspartate: step 4/4. Catalyzes the conversion of 4-hydroxy-tetrahydrodipicolinate (HTPA) to tetrahydrodipicolinate. The sequence is that of 4-hydroxy-tetrahydrodipicolinate reductase from Lactobacillus acidophilus (strain ATCC 700396 / NCK56 / N2 / NCFM).